The following is a 407-amino-acid chain: NADH-quinone oxidoreductase subunit D (407 aa).

Belongs to the complex I 49 kDa subunit family. In terms of assembly, NDH-1 is composed of 14 different subunits. Subunits NuoB, C, D, E, F, and G constitute the peripheral sector of the complex.

It is found in the cell inner membrane. It catalyses the reaction a quinone + NADH + 5 H(+)(in) = a quinol + NAD(+) + 4 H(+)(out). Its function is as follows. NDH-1 shuttles electrons from NADH, via FMN and iron-sulfur (Fe-S) centers, to quinones in the respiratory chain. The immediate electron acceptor for the enzyme in this species is believed to be ubiquinone. Couples the redox reaction to proton translocation (for every two electrons transferred, four hydrogen ions are translocated across the cytoplasmic membrane), and thus conserves the redox energy in a proton gradient. The sequence is that of NADH-quinone oxidoreductase subunit D from Roseobacter denitrificans (strain ATCC 33942 / OCh 114) (Erythrobacter sp. (strain OCh 114)).